The following is a 61-amino-acid chain: Aerolysin regulatory protein (61 aa).

Residues 1 to 14 (MMIKRHLPQPRHRE) are compositionally biased toward basic residues. The interval 1-61 (MMIKRHLPQP…GQTHTGPQIR (61 aa)) is disordered. The segment covering 51–61 (DGQTHTGPQIR) has biased composition (polar residues).

Functionally, regulation of the expression of aerolysin. This is Aerolysin regulatory protein (aerC) from Aeromonas sobria.